We begin with the raw amino-acid sequence, 792 residues long: Kinesin-associated protein 3 (792 aa).

The residue at position 60 (S60) is a Phosphoserine. Positions 103–119 are enriched in basic and acidic residues; sequence LSGKEKKEKSSKPKDPP. Residues 103-124 form a disordered region; that stretch reads LSGKEKKEKSSKPKDPPPFEGM. ARM repeat units follow at residues 333 to 373, 374 to 412, 494 to 533, 578 to 620, and 621 to 662; these read FMEN…NLSF, DTGL…HISM, DGPT…NLTI, DDSC…QMVF, and HQAT…IIAE.

As to quaternary structure, heterotrimer of KIFAP3, KIF3A and KIF3B. Interacts with RAP1GDS1/SMG GDS. Interacts with SMC3 subunit of the cohesin complex. Phosphorylated on tyrosine residues by SRC in vitro; this reduces the binding affinity of the protein for RAP1GDS1.

In terms of biological role, involved in tethering the chromosomes to the spindle pole and in chromosome movement. Binds to the tail domain of the KIF3A/KIF3B heterodimer to form a heterotrimeric KIF3 complex and may regulate the membrane binding of this complex. The polypeptide is Kinesin-associated protein 3 (KIFAP3) (Homo sapiens (Human)).